The sequence spans 800 residues: Cell division cycle 5-like protein (800 aa).

HTH myb-type domains are found at residues 1–56 and 57–106; these read MRNV…DPSI and KKTE…DEVQ. 2 consecutive DNA-binding regions (H-T-H motif) follow at residues 29-52 and 80-102; these read WARI…HEWL and WKTI…NRLL. Disordered stretches follow at residues 109-186, 334-378, 399-445, and 571-610; these read QDNE…KRKF, YEKL…NIRT, QTPL…KQSL, and NKTF…NDND. Positions 113–122 are enriched in gly residues; it reads NGGGSGGGGT. Residues 133–142 are compositionally biased toward basic and acidic residues; it reads NDPRRLRMGD. Over residues 340–351 the composition is skewed to gly residues; the sequence is SGSGGGSGGVGV. Residues 361–376 show a composition bias toward low complexity; sequence TASISSTAANNNTNNI. 2 stretches are compositionally biased toward polar residues: residues 409–445 and 573–584; these read NVSQ…KQSL and TFPNDSITPSST. The span at 592–601 shows a compositional bias: basic and acidic residues; sequence DNHHHHHDDI. Coiled coils occupy residues 621 to 700 and 748 to 800; these read NTEL…KIKN and VALK…LSIF.

The protein belongs to the CEF1 family. Component of the precatalytic, catalytic and postcatalytic spliceosome complexes.

It is found in the nucleus. The protein resides in the cytoplasm. DNA-binding protein involved in cell cycle control. May act as a transcription activator. Plays a role in pre-mRNA splicing as core component of precatalytic, catalytic and postcatalytic spliceosomal complexes. May also play a role in the response to DNA damage (DDR). This chain is Cell division cycle 5-like protein (cdc5l), found in Dictyostelium discoideum (Social amoeba).